The sequence spans 346 residues: Putative isoaspartyl peptidase/L-asparaginase (346 aa).

The active-site Nucleophile is the threonine 207. Substrate is bound by residues 235–238 (RVGD) and 257–260 (TGTG).

Belongs to the Ntn-hydrolases family. As to quaternary structure, heterodimer of an alpha and beta chain produced by autocleavage. In terms of processing, cleaved into an alpha and beta chain by autocatalysis; this activates the enzyme. The N-terminal residue of the beta subunit is responsible for the nucleophile hydrolase activity.

It catalyses the reaction Cleavage of a beta-linked Asp residue from the N-terminus of a polypeptide.. The catalysed reaction is L-asparagine + H2O = L-aspartate + NH4(+). Has both L-asparaginase and beta-aspartyl peptidase activity. Does not have aspartylglucosaminidase activity and is inactive toward GlcNAc-L-Asn. Likewise, has no activity toward glutamine. This Dictyostelium discoideum (Social amoeba) protein is Putative isoaspartyl peptidase/L-asparaginase.